The sequence spans 134 residues: Small ribosomal subunit protein uS8 (134 aa).

It belongs to the universal ribosomal protein uS8 family. Part of the 30S ribosomal subunit. Contacts proteins S5 and S12.

In terms of biological role, one of the primary rRNA binding proteins, it binds directly to 16S rRNA central domain where it helps coordinate assembly of the platform of the 30S subunit. The protein is Small ribosomal subunit protein uS8 of Synechococcus sp. (strain JA-3-3Ab) (Cyanobacteria bacterium Yellowstone A-Prime).